Consider the following 319-residue polypeptide: Acetyl-coenzyme A carboxylase carboxyl transferase subunit alpha (319 aa).

Residues 35–296 (DLDKEIEQLE…KANLLRQLED (262 aa)) enclose the CoA carboxyltransferase C-terminal domain.

It belongs to the AccA family. Acetyl-CoA carboxylase is a heterohexamer composed of biotin carboxyl carrier protein (AccB), biotin carboxylase (AccC) and two subunits each of ACCase subunit alpha (AccA) and ACCase subunit beta (AccD).

Its subcellular location is the cytoplasm. The catalysed reaction is N(6)-carboxybiotinyl-L-lysyl-[protein] + acetyl-CoA = N(6)-biotinyl-L-lysyl-[protein] + malonyl-CoA. Its pathway is lipid metabolism; malonyl-CoA biosynthesis; malonyl-CoA from acetyl-CoA: step 1/1. Component of the acetyl coenzyme A carboxylase (ACC) complex. First, biotin carboxylase catalyzes the carboxylation of biotin on its carrier protein (BCCP) and then the CO(2) group is transferred by the carboxyltransferase to acetyl-CoA to form malonyl-CoA. This is Acetyl-coenzyme A carboxylase carboxyl transferase subunit alpha from Vibrio campbellii (strain ATCC BAA-1116).